Here is a 503-residue protein sequence, read N- to C-terminus: Lysine--tRNA ligase (503 aa).

The 'HIGH' region motif lies at 23–31 (PSGPIHVGN). The 'KMSKS' region motif lies at 267–271 (AMHSS).

It belongs to the class-I aminoacyl-tRNA synthetase family.

Its subcellular location is the cytoplasm. It carries out the reaction tRNA(Lys) + L-lysine + ATP = L-lysyl-tRNA(Lys) + AMP + diphosphate. This Thermoplasma volcanium (strain ATCC 51530 / DSM 4299 / JCM 9571 / NBRC 15438 / GSS1) protein is Lysine--tRNA ligase.